A 150-amino-acid polypeptide reads, in one-letter code: uncharacterized protein (150 aa).

A run of 4 helical transmembrane segments spans residues 12 to 30, 40 to 62, 74 to 96, and 106 to 128; these read IVQR…YFLF, RLLS…LVLF, IRRT…VLSG, and ALID…SRAV.

It is found in the cell membrane. This is an uncharacterized protein from Archaeoglobus fulgidus (strain ATCC 49558 / DSM 4304 / JCM 9628 / NBRC 100126 / VC-16).